Here is a 291-residue protein sequence, read N- to C-terminus: Phosphatidylglycerol--prolipoprotein diacylglyceryl transferase (291 aa).

7 helical membrane passes run 21–41, 60–80, 96–116, 130–150, 198–218, 225–245, and 260–280; these read VALH…MWLA, LLYA…VLFY, WDGG…MIIF, FIAP…FING, SQLY…NLFI, GAVS…VEFF, and ISMG…MMVW. Residue arginine 143 coordinates a 1,2-diacyl-sn-glycero-3-phospho-(1'-sn-glycerol).

This sequence belongs to the Lgt family.

The protein resides in the cell inner membrane. It carries out the reaction L-cysteinyl-[prolipoprotein] + a 1,2-diacyl-sn-glycero-3-phospho-(1'-sn-glycerol) = an S-1,2-diacyl-sn-glyceryl-L-cysteinyl-[prolipoprotein] + sn-glycerol 1-phosphate + H(+). The protein operates within protein modification; lipoprotein biosynthesis (diacylglyceryl transfer). In terms of biological role, catalyzes the transfer of the diacylglyceryl group from phosphatidylglycerol to the sulfhydryl group of the N-terminal cysteine of a prolipoprotein, the first step in the formation of mature lipoproteins. The sequence is that of Phosphatidylglycerol--prolipoprotein diacylglyceryl transferase from Salmonella choleraesuis (strain SC-B67).